A 190-amino-acid chain; its full sequence is MRPAVQVALLGGSFNPPHVGHLMAATYVHATQDVDEVWLMPSWQHPFGKQMEPFEHRVAMCDALCAETSGWLKTSRIEQEPGLSGRTVDTLTLLVARHPDIRWSIIIGSDILRDLPHWKDFHRIEELSRVMVLNRAGYPAPNTLGPPLAEVSSTLIRDLLARGEAPSDLVPARAIAYAREHGLYGLKRTP.

Belongs to the NadD family.

It catalyses the reaction nicotinate beta-D-ribonucleotide + ATP + H(+) = deamido-NAD(+) + diphosphate. It participates in cofactor biosynthesis; NAD(+) biosynthesis; deamido-NAD(+) from nicotinate D-ribonucleotide: step 1/1. Functionally, catalyzes the reversible adenylation of nicotinate mononucleotide (NaMN) to nicotinic acid adenine dinucleotide (NaAD). The chain is Probable nicotinate-nucleotide adenylyltransferase from Myxococcus xanthus (strain DK1622).